An 80-amino-acid chain; its full sequence is FXYD domain-containing ion transport regulator 7 (80 aa).

Residues Met-1–Tyr-22 lie on the Extracellular side of the membrane. O-linked (GlcNAc) threonine glycans are attached at residues Thr-3, Thr-5, and Thr-9. The helical transmembrane segment at Ala-23–Ile-45 threads the bilayer. The Cytoplasmic segment spans residues Ser-46 to Val-80. A disordered region spans residues Ser-56 to Val-80. Ser-73 bears the Phosphoserine mark.

The protein belongs to the FXYD family. In terms of assembly, regulatory subunit of the sodium/potassium-transporting ATPase which is composed of a catalytic alpha subunit, a non-catalytic beta subunit and an additional regulatory subunit. The regulatory subunit, a member of the FXYD protein family, modulates the enzymatic activity in a tissue- and isoform-specific way by changing affinities of the Na+/K+-ATPase toward Na(+), K(+) or ATP. Post-translationally, O-glycosylated; required for stabilization and translocation to the plasma membrane. In terms of tissue distribution, expressed specifically in brain. Expressed in both neurons and glia.

The protein resides in the cell membrane. Associates with and regulates the activity of the sodium/potassium-transporting ATPase (NKA) which catalyzes the hydrolysis of ATP coupled with the exchange of Na(+) and K(+) ions across the plasma membrane. Reduces the apparent affinity for external K(+), an effect that depends on the presence of external Na(+) and voltage. Increases the apparent affinity for intracellular Na(+). The sequence is that of FXYD domain-containing ion transport regulator 7 (Fxyd7) from Rattus norvegicus (Rat).